A 102-amino-acid chain; its full sequence is MASQTIRIRLKSYEHGILDESAAKIVATAKRTGAEISGPVPLPTERTLFTVLRSPHKNKDSREQFEMRTHKRLIDILNPTPKTVDSLMKLDLPSGVDIEIKL.

This sequence belongs to the universal ribosomal protein uS10 family. In terms of assembly, part of the 30S ribosomal subunit.

Its function is as follows. Involved in the binding of tRNA to the ribosomes. The sequence is that of Small ribosomal subunit protein uS10 from Lactobacillus helveticus (strain DPC 4571).